The primary structure comprises 78 residues: Apolipoprotein C-I (78 aa).

A signal peptide spans 1 to 26; sequence MRLILWLPVLVVVLLMVLEGPAPAQG.

It belongs to the apolipoprotein C1 family.

The protein localises to the secreted. Inhibitor of lipoprotein binding to the low density lipoprotein (LDL) receptor, LDL receptor-related protein, and very low density lipoprotein (VLDL) receptor. Associates with high density lipoproteins (HDL) and the triacylglycerol-rich lipoproteins in the plasma and makes up about 10% of the protein of the VLDL and 2% of that of HDL. Appears to interfere directly with fatty acid uptake and is also the major plasma inhibitor of cholesteryl ester transfer protein (CETP). Binds free fatty acids and reduces their intracellular esterification. Modulates the interaction of APOE with beta-migrating VLDL and inhibits binding of beta-VLDL to the LDL receptor-related protein. This chain is Apolipoprotein C-I (APOC1), found in Lynx pardinus (Iberian lynx).